The chain runs to 359 residues: uncharacterized protein (359 aa).

The region spanning 43–309 (YHLIRKLGSG…VLDFLGDDWG (267 aa)) is the Protein kinase domain. Residues 49 to 57 (LGSGSYGRV) and K72 each bind ATP. Residue D163 is the Proton acceptor of the active site. Positions 314–359 (REGPGVLGSAVSYEDREEGGSSLEEWTDEGDDSKSGGRTGTDGGAP) are disordered. Residues 350–359 (GRTGTDGGAP) are compositionally biased toward gly residues.

Belongs to the protein kinase superfamily. Ser/Thr protein kinase family. STKL subfamily.

It carries out the reaction L-seryl-[protein] + ATP = O-phospho-L-seryl-[protein] + ADP + H(+). The enzyme catalyses L-threonyl-[protein] + ATP = O-phospho-L-threonyl-[protein] + ADP + H(+). This is an uncharacterized protein from Homo sapiens (Human).